We begin with the raw amino-acid sequence, 229 residues long: Wtf element wtf14 (229 aa).

The span at 1–26 (MENNHHLAKDSLDELNPKRGKGEHET) shows a compositional bias: basic and acidic residues. Residues 1–27 (MENNHHLAKDSLDELNPKRGKGEHETQ) are disordered. The next 4 helical transmembrane spans lie at 71–91 (IPAV…YLVF), 100–120 (VLFG…LLAT), 151–171 (LYAI…LMFF), and 188–208 (VIGV…PGLF).

It belongs to the WTF family.

It is found in the endoplasmic reticulum membrane. May act in meiotic drive. The polypeptide is Wtf element wtf14 (Schizosaccharomyces pombe (strain 972 / ATCC 24843) (Fission yeast)).